The following is a 391-amino-acid chain: Coproporphyrin III ferrochelatase (391 aa).

The Fe-coproporphyrin III site is built by S79 and Y148. Fe(2+) is bound by residues H211 and E305.

It belongs to the ferrochelatase family.

The protein localises to the cytoplasm. It catalyses the reaction Fe-coproporphyrin III + 2 H(+) = coproporphyrin III + Fe(2+). It participates in porphyrin-containing compound metabolism; protoheme biosynthesis. Involved in coproporphyrin-dependent heme b biosynthesis. Catalyzes the insertion of ferrous iron into coproporphyrin III to form Fe-coproporphyrin III. This Tropheryma whipplei (strain TW08/27) (Whipple's bacillus) protein is Coproporphyrin III ferrochelatase.